The following is a 130-amino-acid chain: Large ribosomal subunit protein bL20 (130 aa).

Belongs to the bacterial ribosomal protein bL20 family.

In terms of biological role, binds directly to 23S ribosomal RNA and is necessary for the in vitro assembly process of the 50S ribosomal subunit. It is not involved in the protein synthesizing functions of that subunit. The protein is Large ribosomal subunit protein bL20 of Clavibacter michiganensis subsp. michiganensis (strain NCPPB 382).